The primary structure comprises 462 residues: Glycerol-3-phosphate acyltransferase ATS12, chloroplastic (462 aa).

The N-terminal 82 residues, 1-82 (MFILSSSSST…DKESAQSAAT (82 aa)), are a transit peptide targeting the chloroplast. Positions 233 to 238 (HQTEAD) match the HXXXXD motif motif.

It belongs to the GPAT/DAPAT family.

It localises to the plastid. Its subcellular location is the chloroplast stroma. It carries out the reaction a fatty acyl-[ACP] + sn-glycerol 3-phosphate = a 1-acyl-sn-glycero-3-phosphate + holo-[ACP]. The enzyme catalyses sn-glycerol 3-phosphate + an acyl-CoA = a 1-acyl-sn-glycero-3-phosphate + CoA. Its pathway is phospholipid metabolism; CDP-diacylglycerol biosynthesis; CDP-diacylglycerol from sn-glycerol 3-phosphate: step 1/3. Functionally, esterifies the acyl-group from acyl-acyl carrier proteins (acyl-ACPs) to the sn-1 position of glycerol-3-phosphate. The physiological acyl donors in chloroplasts are acyl-ACPs, but acyl-CoAs are used as artificial donor for in vitro reactions. The enzyme from chilling-resistant plants discriminates against non-fluid palmitic acid and selects oleic acid whereas the enzyme from sensitive plants accepts both fatty acids. Squash is chilling-sensitive. Does not seem to discriminate between the acyl-ACP thioesters 18:1-ACP, 18:0-ACP and 16:0-ACP. Exhibits higher selectivity for 16:0-CoA than 18:1-CoA in vitro. This Cucurbita moschata (Winter crookneck squash) protein is Glycerol-3-phosphate acyltransferase ATS12, chloroplastic.